The primary structure comprises 351 residues: MNVKEHVISLPRRVFVGHDIIYDISIYFSQLGITSPFLIVTGTKYTKKIADRVIENLPKNAKYEVIEIDTATLDDVYKVEEVVKKVNPNILLGIGGGKVIDVTKYAAFRNNLEFVSIPTSPSHDGITSPFASIKGLQKPVSVKAKEPLAIIADIEILSLSPRRLINAGIGDTIGKIIAVRDWRLAAKLRGEYYGDYTASLALMSAKHAFQCTKIINKDIKYGVRMLIEALISSGVAMGMAGSTRPASGSEHLFAHAVELLHPEGVLHGELVGLGTIIMAYLHGINWKIIRDRLKKIGFPVKAKDLGLSDEEVIKALTIAHTIRPERYTILGDRGLTWSSAEKIARVTKIID.

NAD(+)-binding positions include 97–101 and 119–122; these read GKVID and TSPS. Aspartate 124 is a substrate binding site. Position 128 (serine 128) interacts with NAD(+). Aspartate 171 is a binding site for substrate. 2 residues coordinate Zn(2+): aspartate 171 and histidine 251. Histidine 255 provides a ligand contact to substrate. A Zn(2+)-binding site is contributed by histidine 267.

The protein belongs to the glycerol-1-phosphate dehydrogenase family. As to quaternary structure, homodimer. It depends on Zn(2+) as a cofactor.

The protein localises to the cytoplasm. It catalyses the reaction sn-glycerol 1-phosphate + NAD(+) = dihydroxyacetone phosphate + NADH + H(+). The enzyme catalyses sn-glycerol 1-phosphate + NADP(+) = dihydroxyacetone phosphate + NADPH + H(+). It participates in membrane lipid metabolism; glycerophospholipid metabolism. Its function is as follows. Catalyzes the NAD(P)H-dependent reduction of dihydroxyacetonephosphate (DHAP or glycerone phosphate) to glycerol 1-phosphate (G1P). The G1P thus generated is used as the glycerophosphate backbone of phospholipids in the cellular membranes of Archaea. In Saccharolobus islandicus (strain Y.N.15.51 / Yellowstone #2) (Sulfolobus islandicus), this protein is Glycerol-1-phosphate dehydrogenase [NAD(P)+].